The chain runs to 489 residues: Betaine aldehyde dehydrogenase (489 aa).

Residues Thr26 and Asp93 each contribute to the K(+) site. Residue 150–152 (GAW) coordinates NAD(+). Catalysis depends on Lys162, which acts as the Charge relay system. 176–179 (KPSE) provides a ligand contact to NAD(+). Ile180 contacts K(+). 229-232 (GVET) serves as a coordination point for NAD(+). Leu245 provides a ligand contact to K(+). The active-site Proton acceptor is the Glu251. NAD(+)-binding residues include Gly253, Cys285, and Glu386. The Nucleophile role is filled by Cys285. Cys285 bears the Cysteine sulfenic acid (-SOH) mark. K(+)-binding residues include Lys456 and Gly459. Glu463 serves as the catalytic Charge relay system.

It belongs to the aldehyde dehydrogenase family. In terms of assembly, dimer of dimers. K(+) serves as cofactor.

It catalyses the reaction betaine aldehyde + NAD(+) + H2O = glycine betaine + NADH + 2 H(+). It functions in the pathway amine and polyamine biosynthesis; betaine biosynthesis via choline pathway; betaine from betaine aldehyde: step 1/1. Involved in the biosynthesis of the osmoprotectant glycine betaine. Catalyzes the irreversible oxidation of betaine aldehyde to the corresponding acid. The sequence is that of Betaine aldehyde dehydrogenase from Paraburkholderia phytofirmans (strain DSM 17436 / LMG 22146 / PsJN) (Burkholderia phytofirmans).